We begin with the raw amino-acid sequence, 112 residues long: UPF0342 protein SUB0718 (112 aa).

It belongs to the UPF0342 family.

This is UPF0342 protein SUB0718 from Streptococcus uberis (strain ATCC BAA-854 / 0140J).